A 398-amino-acid polypeptide reads, in one-letter code: Palmitoyl-[acyl-carrier-protein] 4-desaturase 3, chloroplastic (398 aa).

The transit peptide at 1–29 (MALRSLFLPNAFPNASSFRGGSRRGAAPR) directs the protein to the chloroplast. Fe cation contacts are provided by Glu139, Glu177, His180, Glu230, Glu263, and His266.

This sequence belongs to the fatty acid desaturase type 2 family. In terms of assembly, homodimer. Fe(2+) is required as a cofactor. As to expression, preferentially expressed in the flower labellum. Low expression in leaves.

It localises to the plastid. It is found in the chloroplast stroma. It catalyses the reaction hexadecanoyl-[ACP] + 2 reduced [2Fe-2S]-[ferredoxin] + O2 + 2 H(+) = (4Z)-hexadecenoyl-[ACP] + 2 oxidized [2Fe-2S]-[ferredoxin] + 2 H2O. It functions in the pathway lipid metabolism; fatty acid metabolism. Converts palmitoyl-ACP to (4Z)-hexadec-4-enoyl-ACP by introduction of a cis double bond between carbons 4 and 5 of the acyl chain. The protein is Palmitoyl-[acyl-carrier-protein] 4-desaturase 3, chloroplastic (SAD3) of Ophrys arachnitiformis subsp. archipelagi (Orchid).